The chain runs to 557 residues: Dihydroxy-acid dehydratase (557 aa).

D78 serves as a coordination point for Mg(2+). Residue C119 participates in [2Fe-2S] cluster binding. Residues D120 and K121 each contribute to the Mg(2+) site. N6-carboxylysine is present on K121. [2Fe-2S] cluster is bound at residue C192. A Mg(2+)-binding site is contributed by E442. The active-site Proton acceptor is the S468.

The protein belongs to the IlvD/Edd family. As to quaternary structure, homodimer. [2Fe-2S] cluster serves as cofactor. The cofactor is Mg(2+).

The enzyme catalyses (2R)-2,3-dihydroxy-3-methylbutanoate = 3-methyl-2-oxobutanoate + H2O. It carries out the reaction (2R,3R)-2,3-dihydroxy-3-methylpentanoate = (S)-3-methyl-2-oxopentanoate + H2O. Its pathway is amino-acid biosynthesis; L-isoleucine biosynthesis; L-isoleucine from 2-oxobutanoate: step 3/4. It functions in the pathway amino-acid biosynthesis; L-valine biosynthesis; L-valine from pyruvate: step 3/4. In terms of biological role, functions in the biosynthesis of branched-chain amino acids. Catalyzes the dehydration of (2R,3R)-2,3-dihydroxy-3-methylpentanoate (2,3-dihydroxy-3-methylvalerate) into 2-oxo-3-methylpentanoate (2-oxo-3-methylvalerate) and of (2R)-2,3-dihydroxy-3-methylbutanoate (2,3-dihydroxyisovalerate) into 2-oxo-3-methylbutanoate (2-oxoisovalerate), the penultimate precursor to L-isoleucine and L-valine, respectively. The protein is Dihydroxy-acid dehydratase of Bacillus cytotoxicus (strain DSM 22905 / CIP 110041 / 391-98 / NVH 391-98).